Here is a 358-residue protein sequence, read N- to C-terminus: Arginine kinase (358 aa).

The 83-residue stretch at 6 to 88 (SVEELWAKLD…LDAVIKEYHK (83 aa)) folds into the Phosphagen kinase N-terminal domain. 61 to 65 (GVGIY) lines the substrate pocket. The region spanning 116-353 (YIVSTRVRVG…EACLAKEKEL (238 aa)) is the Phosphagen kinase C-terminal domain. Residues 119–123 (STRVR) and histidine 182 each bind ATP. Glutamate 222 serves as a coordination point for substrate. Arginine 226 serves as a coordination point for ATP. Cysteine 269 is a binding site for substrate. Residues 278–282 (RASVH) and 306–311 (RGIHGE) each bind ATP. Glutamate 311 contributes to the substrate binding site.

This sequence belongs to the ATP:guanido phosphotransferase family. As to quaternary structure, monomer.

It carries out the reaction L-arginine + ATP = N(omega)-phospho-L-arginine + ADP + H(+). This is Arginine kinase from Haliotis madaka (Giant abalone).